The following is a 253-amino-acid chain: Phosphate import ATP-binding protein PstB 1 (253 aa).

One can recognise an ABC transporter domain in the interval 7–248 (LQIRDLSVYY…PKRKETEDYI (242 aa)). Residue 39–46 (GPSGSGKS) coordinates ATP.

The protein belongs to the ABC transporter superfamily. Phosphate importer (TC 3.A.1.7) family. As to quaternary structure, the complex is composed of two ATP-binding proteins (PstB), two transmembrane proteins (PstC and PstA) and a solute-binding protein (PstS).

Its subcellular location is the cell membrane. The enzyme catalyses phosphate(out) + ATP + H2O = ADP + 2 phosphate(in) + H(+). In terms of biological role, part of the ABC transporter complex PstSACB involved in phosphate import. Responsible for energy coupling to the transport system. This Streptococcus pyogenes serotype M2 (strain MGAS10270) protein is Phosphate import ATP-binding protein PstB 1.